Here is a 142-residue protein sequence, read N- to C-terminus: Succinate dehydrogenase subunit 6, mitochondrial (142 aa).

Residue glycine 2 is modified to N-acetylglycine.

As to quaternary structure, component of complex II composed of eight subunits in plants: four classical SDH subunits SDH1, SDH2, SDH3 and SDH4 (a flavoprotein (FP), an iron-sulfur protein (IP), and a cytochrome b composed of a large and a small subunit.), as well as four subunits unknown in mitochondria from bacteria and heterotrophic eukaryotes.

The protein localises to the mitochondrion inner membrane. Its pathway is carbohydrate metabolism; tricarboxylic acid cycle. The sequence is that of Succinate dehydrogenase subunit 6, mitochondrial from Arabidopsis thaliana (Mouse-ear cress).